We begin with the raw amino-acid sequence, 347 residues long: Quinolinate synthase (347 aa).

Positions 47 and 68 each coordinate iminosuccinate. C113 is a [4Fe-4S] cluster binding site. Residues Y139–N141 and S156 each bind iminosuccinate. C200 contacts [4Fe-4S] cluster. Iminosuccinate-binding positions include H226–E228 and T243. C297 lines the [4Fe-4S] cluster pocket.

The protein belongs to the quinolinate synthase family. Type 1 subfamily. [4Fe-4S] cluster serves as cofactor.

It is found in the cytoplasm. The enzyme catalyses iminosuccinate + dihydroxyacetone phosphate = quinolinate + phosphate + 2 H2O + H(+). The protein operates within cofactor biosynthesis; NAD(+) biosynthesis; quinolinate from iminoaspartate: step 1/1. Catalyzes the condensation of iminoaspartate with dihydroxyacetone phosphate to form quinolinate. The sequence is that of Quinolinate synthase from Shigella dysenteriae serotype 1 (strain Sd197).